Reading from the N-terminus, the 679-residue chain is HEAT repeat-containing protein 3 (679 aa).

The span at 1–11 (MGKSRTKRFKR) shows a compositional bias: basic residues. The disordered stretch occupies residues 1 to 40 (MGKSRTKRFKRPQFSPIESCQAEAAAASNGTGDEEDDGPA). Ser-15 carries the post-translational modification Phosphoserine. HEAT repeat units lie at residues 38–69 (GPAA…VQQR) and 74–110 (DLAR…SACG). Ser-144 carries the post-translational modification Phosphoserine. Residue Thr-339 is modified to Phosphothreonine.

This sequence belongs to the nuclear import and ribosome assembly adapter family. As to quaternary structure, component of a hexameric 5S RNP precursor complex, composed of 5S RNA, RRS1, RPF2/BXDC1, RPL5, RPL11 and HEATR3; this complex acts as a precursor for ribosome assembly.

Plays a role in ribosome biogenesis and in nuclear import of the 60S ribosomal protein L5/large ribosomal subunit protein uL18 (RPL5). Required for proper erythrocyte maturation. The sequence is that of HEAT repeat-containing protein 3 (Heatr3) from Mus musculus (Mouse).